The following is a 407-amino-acid chain: S-adenosylmethionine synthase (407 aa).

H21 serves as a coordination point for ATP. D23 contributes to the Mg(2+) binding site. Residue E49 coordinates K(+). Positions 62 and 105 each coordinate L-methionine. The flexible loop stretch occupies residues 105–115 (QSQEIGAGVDA). ATP is bound by residues 179-181 (DGK), D259, 265-266 (RK), A282, and K286. An L-methionine-binding site is contributed by D259. K290 serves as a coordination point for L-methionine.

The protein belongs to the AdoMet synthase family. In terms of assembly, homotetramer; dimer of dimers. It depends on Mg(2+) as a cofactor. The cofactor is K(+).

It is found in the cytoplasm. The enzyme catalyses L-methionine + ATP + H2O = S-adenosyl-L-methionine + phosphate + diphosphate. Its pathway is amino-acid biosynthesis; S-adenosyl-L-methionine biosynthesis; S-adenosyl-L-methionine from L-methionine: step 1/1. Its function is as follows. Catalyzes the formation of S-adenosylmethionine (AdoMet) from methionine and ATP. The overall synthetic reaction is composed of two sequential steps, AdoMet formation and the subsequent tripolyphosphate hydrolysis which occurs prior to release of AdoMet from the enzyme. In Corynebacterium aurimucosum (strain ATCC 700975 / DSM 44827 / CIP 107346 / CN-1) (Corynebacterium nigricans), this protein is S-adenosylmethionine synthase.